The sequence spans 197 residues: Segregation and condensation protein B (197 aa).

It belongs to the ScpB family. Homodimer. Homodimerization may be required to stabilize the binding of ScpA to the Smc head domains. Component of a cohesin-like complex composed of ScpA, ScpB and the Smc homodimer, in which ScpA and ScpB bind to the head domain of Smc. The presence of the three proteins is required for the association of the complex with DNA.

It is found in the cytoplasm. Its function is as follows. Participates in chromosomal partition during cell division. May act via the formation of a condensin-like complex containing Smc and ScpA that pull DNA away from mid-cell into both cell halves. In Halalkalibacterium halodurans (strain ATCC BAA-125 / DSM 18197 / FERM 7344 / JCM 9153 / C-125) (Bacillus halodurans), this protein is Segregation and condensation protein B.